A 347-amino-acid chain; its full sequence is Globoside alpha-1,3-N-acetylgalactosaminyltransferase 1 (347 aa).

Topologically, residues 1 to 6 (MTRPRL) are cytoplasmic. The chain crosses the membrane as a helical; Signal-anchor for type II membrane protein span at residues 7 to 27 (AQGLAFFLLGGTGLWVLWKFI). Residues 28 to 347 (KDWLLVSYIP…VKKNANWLRT (320 aa)) are Lumenal-facing. N-linked (GlcNAc...) asparagine glycosylation occurs at asparagine 108. Substrate is bound by residues 116–121 (FAVGKY), 206–208 (DVD), and 228–231 (HPGY). 2 residues coordinate Mn(2+): aspartate 206 and aspartate 208. The active-site Nucleophile is the glutamate 298.

Belongs to the glycosyltransferase 6 family. The cofactor is Mn(2+).

Its subcellular location is the golgi apparatus membrane. It catalyses the reaction a globoside Gb4Cer (d18:1(4E)) + UDP-N-acetyl-alpha-D-galactosamine = a globoside Forssman (d18:1(4E)) + UDP + H(+). The enzyme catalyses a globoside Gb4Cer + UDP-N-acetyl-alpha-D-galactosamine = a globoside IV3GalNAc-Gb4Cer + UDP + H(+). It participates in protein modification; protein glycosylation. Catalyzes the formation of Forssman glycolipid via the addition of N-acetylgalactosamine (GalNAc) in alpha-1,3-linkage to GalNAcb-1,3Gala-1,4Galb-1,4GlcCer (Gb4Cer). Forssman glycolipid (also called Forssman antigen; FG) probably serves for adherence of some pathogens. Conversely, it diminishes Shiga toxins susceptibility. The protein is Globoside alpha-1,3-N-acetylgalactosaminyltransferase 1 of Mus musculus (Mouse).